Here is a 148-residue protein sequence, read N- to C-terminus: Single-stranded DNA-binding protein 1-B, mitochondrial (148 aa).

A mitochondrion-targeting transit peptide spans 1–17; that stretch reads MFHRPVLQVFRQFARCQ. The 113-residue stretch at 30 to 142 folds into the SSB domain; that stretch reads MNKVQLLGRV…IIADNIIFLT (113 aa).

Homotetramer.

The protein localises to the mitochondrion. It localises to the mitochondrion matrix. Its subcellular location is the mitochondrion nucleoid. In terms of biological role, binds preferentially and cooperatively to pyrimidine rich single-stranded DNA (ss-DNA). Required to maintain the copy number of mitochondrial DNA (mtDNA) and plays crucial roles during mtDNA replication that stimulate activity of the DNA polymerase at the replication fork. May also function in mtDNA repair. The polypeptide is Single-stranded DNA-binding protein 1-B, mitochondrial (ssbp1-b) (Xenopus laevis (African clawed frog)).